Here is a 448-residue protein sequence, read N- to C-terminus: Maintenance of mitochondrial morphology protein 1 (448 aa).

Topologically, residues 1 to 74 are lumenal; sequence MTESVIYSGT…LNHTWSFTQG (74 aa). The helical transmembrane segment at 75–95 threads the bilayer; sequence LVVGQLSVIVVVAIFIKFFVF. The Cytoplasmic portion of the chain corresponds to 96-448; it reads ADSSATTTTT…IVDKTEEASI (353 aa). Disordered regions lie at residues 119–144 and 303–357; these read RNKN…LNSP and LQNV…SQED. The segment covering 127–140 has biased composition (basic and acidic residues); it reads SNEDKDPNNNKEDD. Residues 164 to 419 form the SMP-LTD domain; that stretch reads SPESLDWFNV…EPRFQVVKVP (256 aa). The segment covering 313 to 332 has biased composition (low complexity); the sequence is PSNEPNSQNQTQQPTPVNNS. Residues 345 to 356 are compositionally biased toward basic and acidic residues; sequence ETKHSKAKRSQE.

It belongs to the MMM1 family. In terms of assembly, homodimer. Component of the ER-mitochondria encounter structure (ERMES) or MDM complex, composed of MMM1, MDM10, MDM12 and MDM34. An MMM1 homodimer associates with one molecule of MDM12 on each side in a pairwise head-to-tail manner, and the SMP-LTD domains of MMM1 and MDM12 generate a continuous hydrophobic tunnel for phospholipid trafficking.

Its subcellular location is the endoplasmic reticulum membrane. Its function is as follows. Component of the ERMES/MDM complex, which serves as a molecular tether to connect the endoplasmic reticulum (ER) and mitochondria. Components of this complex are involved in the control of mitochondrial shape and protein biogenesis, and function in nonvesicular lipid trafficking between the ER and mitochondria. The MDM12-MMM1 subcomplex functions in the major beta-barrel assembly pathway that is responsible for biogenesis of all outer membrane beta-barrel proteins, and acts in a late step after the SAM complex. The MDM10-MDM12-MMM1 subcomplex further acts in the TOM40-specific pathway after the action of the MDM12-MMM1 complex. Essential for establishing and maintaining the structure of mitochondria and maintenance of mtDNA nucleoids. In Debaryomyces hansenii (strain ATCC 36239 / CBS 767 / BCRC 21394 / JCM 1990 / NBRC 0083 / IGC 2968) (Yeast), this protein is Maintenance of mitochondrial morphology protein 1.